Here is a 475-residue protein sequence, read N- to C-terminus: Lipoprotein lipase (475 aa).

A signal peptide spans 1-27 (MESKALLLVALGMWFQSLTATRGGVAA). The interval 32-53 (GDFIDIESKFALRTPEDTAEDT) is interaction with GPIHBP1. Cys-54 and Cys-67 form a disulfide bridge. Asn-70 is a glycosylation site (N-linked (GlcNAc...) asparagine). Residue Tyr-121 is modified to 3'-nitrotyrosine. The Nucleophile role is filled by Ser-159. Asp-183 serves as the catalytic Charge relay system. Tyr-191 is subject to 3'-nitrotyrosine. 4 residues coordinate Ca(2+): Ala-194, Arg-197, Ser-199, and Asp-202. Cys-243 and Cys-266 are oxidised to a cystine. Catalysis depends on His-268, which acts as the Charge relay system. Disulfide bonds link Cys-291–Cys-310 and Cys-302–Cys-305. In terms of domain architecture, PLAT spans 341 to 464 (FHYQVKIHFS…KGKASVVFVK (124 aa)). Tyr-343 is modified (3'-nitrotyrosine). A glycan (N-linked (GlcNAc...) asparagine) is linked at Asn-386. An important for interaction with lipoprotein particles region spans residues 417–421 (WSDWW). The segment at 430 to 434 (KIRVK) is important for heparin binding. The interval 443–467 (IFCSREKVSHLQKGKASVVFVKCHD) is interaction with GPIHBP1. A disulfide bond links Cys-445 and Cys-465.

The protein belongs to the AB hydrolase superfamily. Lipase family. Homodimer. Interacts with GPIHBP1 with 1:1 stoichiometry. Interacts with APOC2; the interaction activates LPL activity in the presence of lipids. Interaction with heparan sulfate proteoglycans is required to protect LPL against loss of activity. Associates with lipoprotein particles in blood plasma. Interacts with LMF1 and SEL1L; interaction with SEL1L is required to prevent aggregation of newly synthesized LPL in the endoplasmic reticulum (ER), and for normal export of LPL from the ER to the extracellular space. Interacts with SORL1; SORL1 acts as a sorting receptor, promoting LPL localization to endosomes and later to lysosomes, leading to degradation of newly synthesized LPL. Tyrosine nitration after lipopolysaccharide (LPS) challenge down-regulates the lipase activity.

It is found in the cell membrane. The protein localises to the secreted. Its subcellular location is the extracellular space. The protein resides in the extracellular matrix. It carries out the reaction a triacylglycerol + H2O = a diacylglycerol + a fatty acid + H(+). The apolipoprotein APOC2 acts as a coactivator of LPL activity. Ca(2+) binding promotes protein stability and formation of the active homodimer. Interaction with GPIHBP1 protects LPL against inactivation by ANGPTL4. Key enzyme in triglyceride metabolism. Catalyzes the hydrolysis of triglycerides from circulating chylomicrons and very low density lipoproteins (VLDL), and thereby plays an important role in lipid clearance from the blood stream, lipid utilization and storage. Mediates margination of triglyceride-rich lipoprotein particles in capillaries. Recruited to its site of action on the luminal surface of vascular endothelium by binding to GPIHBP1 and cell surface heparan sulfate proteoglycans. The polypeptide is Lipoprotein lipase (LPL) (Neovison vison (American mink)).